Here is a 179-residue protein sequence, read N- to C-terminus: Large ribosomal subunit protein uL5 (179 aa).

Belongs to the universal ribosomal protein uL5 family. As to quaternary structure, part of the 50S ribosomal subunit; part of the 5S rRNA/L5/L18/L25 subcomplex. Contacts the 5S rRNA and the P site tRNA. Forms a bridge to the 30S subunit in the 70S ribosome.

Its function is as follows. This is one of the proteins that bind and probably mediate the attachment of the 5S RNA into the large ribosomal subunit, where it forms part of the central protuberance. In the 70S ribosome it contacts protein S13 of the 30S subunit (bridge B1b), connecting the 2 subunits; this bridge is implicated in subunit movement. Contacts the P site tRNA; the 5S rRNA and some of its associated proteins might help stabilize positioning of ribosome-bound tRNAs. The chain is Large ribosomal subunit protein uL5 from Bacillus licheniformis (strain ATCC 14580 / DSM 13 / JCM 2505 / CCUG 7422 / NBRC 12200 / NCIMB 9375 / NCTC 10341 / NRRL NRS-1264 / Gibson 46).